A 152-amino-acid polypeptide reads, in one-letter code: Deoxyuridine 5'-triphosphate nucleotidohydrolase (152 aa).

Residues 71-73, Asn-84, 88-90, and Met-98 each bind substrate; these read RSG and LID.

This sequence belongs to the dUTPase family. It depends on Mg(2+) as a cofactor.

It carries out the reaction dUTP + H2O = dUMP + diphosphate + H(+). It participates in pyrimidine metabolism; dUMP biosynthesis; dUMP from dCTP (dUTP route): step 2/2. In terms of biological role, this enzyme is involved in nucleotide metabolism: it produces dUMP, the immediate precursor of thymidine nucleotides and it decreases the intracellular concentration of dUTP so that uracil cannot be incorporated into DNA. The polypeptide is Deoxyuridine 5'-triphosphate nucleotidohydrolase (Photorhabdus laumondii subsp. laumondii (strain DSM 15139 / CIP 105565 / TT01) (Photorhabdus luminescens subsp. laumondii)).